Reading from the N-terminus, the 317-residue chain is Aquaporin-2 (317 aa).

Residues 1-75 (MSLRDDLTIN…RSQEFKMQHR (75 aa)) lie on the Cytoplasmic side of the membrane. The chain crosses the membrane as a helical span at residues 76 to 96 (EFLAEFIGTLILVLLTCGFCA). Over 97 to 108 (EQTLNIEKSKSW) the chain is Extracellular. Residues 109-129 (LTSSLGSGLSVLIGICVAGHV) traverse the membrane as a helical segment. Residues 130-154 (SGGHLNPAITIAFWVFSGFPIRKVP) are Cytoplasmic-facing. The NPA 1 signature appears at 135–137 (NPA). The helical transmembrane segment at 155-175 (MYITAQLLGAFSGAALLYSIV) threads the bilayer. Over 176–208 (EPAISQFDHGKRQILGELGTAGIFGTYPPLYVG) the chain is Extracellular. A helical transmembrane segment spans residues 209 to 229 (TGSAVASEVVGTAMLLLVVMV). The Cytoplasmic segment spans residues 230–242 (TGHPNNLPFRTAQ). Residues 243 to 263 (GAMIALGVTTISLCIGYTSGF) traverse the membrane as a helical segment. Over 264 to 295 (SLNPARDFGPRLFTAVAGWGIDVFTVHHYYAL) the chain is Extracellular. An NPA 2 motif is present at residues 266-268 (NPA). The helical transmembrane segment at 296–316 (VPMFAPILGGLAGGFIYTVFI) threads the bilayer. Asp-317 is a topological domain (cytoplasmic).

Belongs to the MIP/aquaporin (TC 1.A.8) family.

It localises to the cell membrane. It catalyses the reaction H2O(in) = H2O(out). The enzyme catalyses glycerol(in) = glycerol(out). In terms of biological role, water channel required to facilitate the transport of water across membranes. Contributes to water uptake of spores during the early stages of spore germination. Aquaporins AQP1 and AQP2 act as extracellular pH sensors and enable the spores to hydrate under favorable conditions and to commence germination. Wounded vegetables and fruit present acidic pH, so the optimal pH range for germination is adapted to the relevant host pH. This is Aquaporin-2 from Rhizopus delemar (strain RA 99-880 / ATCC MYA-4621 / FGSC 9543 / NRRL 43880) (Mucormycosis agent).